Reading from the N-terminus, the 537-residue chain is Copine-1 (537 aa).

2 C2 domains span residues M1–L114 and G123–H245. D21, D27, D80, D82, D92, D153, and D159 together coordinate Ca(2+). K171 is subject to N6-acetyllysine. Ca(2+) is bound by residues D214, D216, and D222. Positions N285 to V505 constitute a VWFA domain.

It belongs to the copine family. In terms of assembly, homodimer; homodimerizes via its C2 domains. Interacts with p65/RELA (via N-terminus); this interaction induces proteolytic cleavage of p65/RELA subunit and inhibition of NF-kappa-B transcriptional activity. Interacts (via VWFA domain) with ACTB, CCDC22, MYCBP2, PPP5C, RDX and UBE2O. Requires Ca(2+) as cofactor. Expressed in liver, spleen, muscle, testis, adrenal (at protein level).

It is found in the nucleus. The protein localises to the cytoplasm. It localises to the cell membrane. Its function is as follows. Calcium-dependent phospholipid-binding protein that plays a role in calcium-mediated intracellular processes. Involved in the TNF-alpha receptor signaling pathway in a calcium-dependent manner. Exhibits calcium-dependent phospholipid binding properties. Plays a role in neuronal progenitor cell differentiation; induces neurite outgrowth via a AKT-dependent signaling cascade and calcium-independent manner. May recruit target proteins to the cell membrane in a calcium-dependent manner. May function in membrane trafficking. Involved in TNF-alpha-induced NF-kappa-B transcriptional repression by inducing endoprotease processing of the transcription factor NF-kappa-B p65/RELA subunit. Also induces endoprotease processing of NF-kappa-B p50/NFKB1, p52/NFKB2, RELB and REL. This Bos taurus (Bovine) protein is Copine-1.